Here is a 499-residue protein sequence, read N- to C-terminus: Patatin-like protein 6 (499 aa).

Positions 111-314 (LSIDSGGMRG…AMSNPTAAAI (204 aa)) constitute a PNPLA domain. Positions 116–119 (GGMR) match the GGXR motif. S155 functions as the Nucleophile in the catalytic mechanism. D301 (proton acceptor) is an active-site residue. Positions 301 to 303 (DGG) match the DGA/G motif.

It belongs to the patatin family. Highly expressed in siliques and at lower levels in roots and flowers.

Functionally, possesses non-specific lipolytic acyl hydrolase (LAH) activity. Hydrolyzes phospholipids as well as galactolipids. May play a role in disease resistance. This Arabidopsis thaliana (Mouse-ear cress) protein is Patatin-like protein 6 (PLP6).